Reading from the N-terminus, the 558-residue chain is WW domain-containing adapter protein with coiled-coil (558 aa).

Disordered stretches follow at residues 1–129 (MVMY…WSEH), 159–244 (QRQK…SPAP), and 321–461 (VAQQ…APGR). A compositionally biased stretch (polar residues) spans 22–32 (QPYQTLKYSSK). Composition is skewed to basic and acidic residues over residues 33–46 (SHPDHRHEKMRDSN) and 56–70 (RRSDSPDNKHMDNTG). Residues 72 to 82 (GRAKAIHPHRG) show a composition bias toward basic residues. The span at 99–116 (NHSSLHSSNSHSNPNKSS) shows a compositional bias: low complexity. Residues 120–153 (FEPADDWSEHISSSGKKYYYNCRTEVSQWEKPKE) enclose the WW domain. Over residues 175–184 (PKDRDYRREA) the composition is skewed to basic and acidic residues. Residues 188-200 (TPASYSSTKSSIA) show a composition bias toward polar residues. A compositionally biased stretch (low complexity) spans 204–217 (PSSLTPSSSSAAVS). Polar residues-rich tracts occupy residues 223-234 (NSASSASGSTVP) and 321-378 (VAQQ…MTVK). A compositionally biased stretch (low complexity) spans 402–431 (SPRTLQRQSSQRSPSPGPNHMGSNSSSSSN). Residues 432–443 (NGGGGGGQGPGV) show a composition bias toward gly residues. Residues 529 to 555 (QATLREQRILFLRQQIKELEKLKNQNS) adopt a coiled-coil conformation.

The protein localises to the nucleus. Functionally, acts as a linker between gene transcription and histone H2B monoubiquitination at 'Lys-120' (H2BK120ub1). Positive regulator of amino acid starvation-induced autophagy. Positively regulates MTOR activity. May negatively regulate the ubiquitin proteasome pathway. The sequence is that of WW domain-containing adapter protein with coiled-coil (waca) from Danio rerio (Zebrafish).